Reading from the N-terminus, the 149-residue chain is Large ribosomal subunit protein bL9 (149 aa).

It belongs to the bacterial ribosomal protein bL9 family.

Binds to the 23S rRNA. This chain is Large ribosomal subunit protein bL9, found in Vibrio cholerae serotype O1 (strain ATCC 39541 / Classical Ogawa 395 / O395).